Consider the following 314-residue polypeptide: Polyadenylate-binding protein-interacting protein 8 (314 aa).

A disordered region spans residues 1–47 (MAAITEMATDSNDVINDGGTGDGIEKSTDSKPEIESDDLKPKSKPEY). The segment covering 23–47 (GIEKSTDSKPEIESDDLKPKSKPEY) has biased composition (basic and acidic residues). The PAM2-like motif lies at 59 to 69 (KLNPEAKEFFP). The Bipartite nuclear localization signal signature appears at 99–112 (RRRRNNYNQGRRVR). RRM domains follow at residues 128–203 (RTVY…PSKT) and 225–301 (RTIY…PSKT).

Interacts with MPC. Expressed in cauline leaves, stems, rosette leaves, immature siliques and primary inflorescences but at a low level.

The protein resides in the nucleus. This chain is Polyadenylate-binding protein-interacting protein 8 (CID8), found in Arabidopsis thaliana (Mouse-ear cress).